Consider the following 453-residue polypeptide: Membrane-bound acylglycerophosphatidylinositol O-acyltransferase mboa-7 (453 aa).

The next 7 helical transmembrane spans lie at 4–24 (ILGL…FSFG), 36–56 (ILAS…PKIV), 79–99 (LYVF…HYIL), 154–174 (AYFY…QMLI), 195–215 (VRLL…PLDI), 220–240 (AIWE…FVVF), and 244–264 (VYSA…GIYP). The N-linked (GlcNAc...) asparagine glycan is linked to Asn319. His350 is a catalytic residue. The next 2 membrane-spanning stretches (helical) occupy residues 354-374 (AGYF…DVIF) and 421-441 (FWSS…IYSA).

It belongs to the membrane-bound acyltransferase family. Expressed ubiquitously throughout development from early embryo to larval and adult stages. In adults, strongly expressed in pharyngeal muscle, body wall muscle, vulval cells, distal tip cells, intestinal cells and spermatheca.

It is found in the membrane. The catalysed reaction is 1-octadecanoyl-sn-glycero-3-phospho-(1D-myo-inositol) + (5Z,8Z,11Z,14Z,17Z)-eicosapentaenoyl-CoA = 1-octadecanoyl-2-(5Z,8Z,11Z,14Z,17Z-eicosapentaenoyl)-sn-glycero-3-phospho-(1D-myo-inositol) + CoA. The enzyme catalyses a 1-acyl-sn-glycero-3-phospho-(1D-myo-inositol) + (5Z,8Z,11Z,14Z,17Z)-eicosapentaenoyl-CoA = a 1-acyl-2-(5Z,8Z,11Z,14Z,17Z-eicosapentaenoyl)-sn-glycero-3-phospho-(1D-myo-inositol) + CoA. It catalyses the reaction a 1-acyl-sn-glycero-3-phospho-(1D-myo-inositol) + (5Z,8Z,11Z,14Z)-eicosatetraenoyl-CoA = a 1-acyl-2-(5Z,8Z,11Z,14Z-eicosatetraenoyl)-sn-glycero-3-phospho-(1D-myo-inositol) + CoA. It functions in the pathway lipid metabolism; phospholipid metabolism. Acyltransferase which mediates the conversion of lysophosphatidylinositol (1-acyl-sn-glycero-3-phosphatidylinositol or LPI) into phosphatidylinositol (1,2-diacyl-sn-glycero-3-phosphoinositol or PI) (LPIAT activity). Prefers sn-2-LPI rather than sn-1-LPI as the acyl acceptor. Lysophospholipid acyltransferases (LPLATs) catalyze the reacylation step of the phospholipid remodeling pathway also known as the Lands cycle. Involved in the selective incorporation of arachidonoyl-CoA ((5Z,8Z,11Z,14Z)-eicosatetraenoyl-CoA) and (5Z,8Z,11Z,14Z,17Z)-eicosapentaenoyl-CoA (EPA-CoA) into PI. Besides its role in biomembranes, PI is a precursor of PI 3-phosphate (PIP3) and its fatty acid composition has an important role in PI3P signaling. The polypeptide is Membrane-bound acylglycerophosphatidylinositol O-acyltransferase mboa-7 (Caenorhabditis elegans).